A 233-amino-acid polypeptide reads, in one-letter code: MKVGIIGAMEEEVTLLRDRIENRQTLARAGCEIYTGQLNGIDVALLKSGIGKVAAAMGTTLLLEHCQPDLVINTGSAGGLDSSLKVGDIVVSNEVRYHDADVTAFGYEPGQMAGCPAAFVADEDLIALAENCIQQLKLNAVRGLICSGDAFINGAEPLTRIRAAFPTVAAVEMEAAAIGHVCYLFNTPFVVVRAISDVADQASHLSFEEFLVVAAKQSTLMIKAMLTTLAQRG.

E12 acts as the Proton acceptor in catalysis. Residues G78, I152, and 173 to 174 (ME) each bind substrate. D197 functions as the Proton donor in the catalytic mechanism.

It belongs to the PNP/UDP phosphorylase family. MtnN subfamily. Homodimer.

The enzyme catalyses S-adenosyl-L-homocysteine + H2O = S-(5-deoxy-D-ribos-5-yl)-L-homocysteine + adenine. It carries out the reaction S-methyl-5'-thioadenosine + H2O = 5-(methylsulfanyl)-D-ribose + adenine. It catalyses the reaction 5'-deoxyadenosine + H2O = 5-deoxy-D-ribose + adenine. The protein operates within amino-acid biosynthesis; L-methionine biosynthesis via salvage pathway; S-methyl-5-thio-alpha-D-ribose 1-phosphate from S-methyl-5'-thioadenosine (hydrolase route): step 1/2. Its function is as follows. Catalyzes the irreversible cleavage of the glycosidic bond in both 5'-methylthioadenosine (MTA) and S-adenosylhomocysteine (SAH/AdoHcy) to adenine and the corresponding thioribose, 5'-methylthioribose and S-ribosylhomocysteine, respectively. Also cleaves 5'-deoxyadenosine, a toxic by-product of radical S-adenosylmethionine (SAM) enzymes, into 5-deoxyribose and adenine. Thus, is required for in vivo function of the radical SAM enzymes biotin synthase and lipoic acid synthase, that are inhibited by 5'-deoxyadenosine accumulation. This is 5'-methylthioadenosine/S-adenosylhomocysteine nucleosidase from Yersinia pestis bv. Antiqua (strain Antiqua).